Consider the following 90-residue polypeptide: DNA-directed RNA polymerase subunit omega (90 aa).

The interval Arg-69–Arg-90 is disordered.

It belongs to the RNA polymerase subunit omega family. The RNAP catalytic core consists of 2 alpha, 1 beta, 1 beta' and 1 omega subunit. When a sigma factor is associated with the core the holoenzyme is formed, which can initiate transcription.

It carries out the reaction RNA(n) + a ribonucleoside 5'-triphosphate = RNA(n+1) + diphosphate. Promotes RNA polymerase assembly. Latches the N- and C-terminal regions of the beta' subunit thereby facilitating its interaction with the beta and alpha subunits. The sequence is that of DNA-directed RNA polymerase subunit omega from Vibrio vulnificus (strain CMCP6).